A 130-amino-acid chain; its full sequence is MNVRRALADTSVFIGIEATRFDPDRFAGYEWGVSVVTLGELRLGVLQASGPEAAARRLSTYQLAQRFEPLGIDEAVSEAWALLVSKLRAAKLRVPINDSWIAATAVAHGIAILTQDNDYAAMPDVEVITI.

Residues 7-130 (LADTSVFIGI…AMPDVEVITI (124 aa)) enclose the PINc domain. Residues aspartate 9 and aspartate 98 each contribute to the Mg(2+) site.

This sequence belongs to the PINc/VapC protein family. In terms of assembly, interacts with cognate antitoxin VapB4. Mg(2+) is required as a cofactor.

It localises to the secreted. Toxic component of a type II toxin-antitoxin (TA) system. Probably exerts its toxic effect by binding to mRNA, inhibiting translation. Binds to, recognizes and cleaves ssRNA at ACGC and AC(A/U)GC sequences, usually between the G and C; cleavage is not very efficient, nor is cleavage required to inhibit protein synthesis. Upon expression in situ, in M.smegmatis or E.coli inhibits cell growth and colony formation; in at least E.coli also causes increased levels of cellular RNA. Its toxic effect is neutralized by coexpression with cognate antitoxin VapB4. In Mycobacterium tuberculosis (strain ATCC 25618 / H37Rv), this protein is Ribonuclease VapC4.